Reading from the N-terminus, the 1451-residue chain is ARF guanine-nucleotide exchange factor GNOM (1451 aa).

The interval 1 to 246 (MGRLKLHSGI…VNRAGSIKQE (246 aa)) is DCB domain. Residues 557–752 (RRKYIKRRLM…NEIRTTPEQG (196 aa)) enclose the SEC7 domain. E658 is an active-site residue. Positions 1430-1451 (SQLGDDETVSNGLSSPENTTGS) are disordered.

In terms of assembly, homodimer. Interacts with CYP19-4/CYP5 in vitro. In terms of tissue distribution, stems, leaves, flowers, siliques, floral inflorescence and roots. Expressed in the whole plant (at the protein level).

The protein resides in the cytoplasm. It localises to the cytosol. It is found in the endosome membrane. Its subcellular location is the cell membrane. With respect to regulation, inhibited by brefeldin A (BFA). In terms of biological role, activates the ARF proteins by exchanging bound GDP for free GTP. Plays a role in vesicular protein sorting. Acts as the major regulator of endosomal vesicle trafficking but is also involved in the endocytosis process. Could function redundantly with GNL1 in the retrograde Golgi to endoplasmic reticulum trafficking. Regulates vesicle trafficking required for the coordinated polar localization of auxin efflux carriers which in turn determines the direction of auxin flow. Mediates the sorting of PIN1 from endosomal compartments to the basal plasma membrane and the polarization of PIN3 to the bottom side of hypocotyl endodermal cells. Involved in the specification of apical-basal pattern formation in the early embryo and during root formation. Required for correct cell wall organization leading to normal cell adhesion during seedling development. Also plays an essential role in hydrotropism of seedling roots. This chain is ARF guanine-nucleotide exchange factor GNOM (GN), found in Arabidopsis thaliana (Mouse-ear cress).